Reading from the N-terminus, the 233-residue chain is CDP-diacylglycerol--glycerol-3-phosphate 3-phosphatidyltransferase 2 (233 aa).

Residues 1–23 form a disordered region; that stretch reads MGEEDTATVDQNSFGGGKDSLLR. The next 5 membrane-spanning stretches (helical) occupy residues 40-60, 71-91, 100-120, 125-145, and 201-221; these read VITLPTVLTLGRVAAVPILVA, TATTSIFIAAAITDWLDGYIA, FGAFLDPVADKLMVAATLILL, MVAVVLGPVPWLVTVPSIAII, and LPSGIGLLYVSAGLSIWSLVV.

The protein belongs to the CDP-alcohol phosphatidyltransferase class-I family. The cofactor is Mn(2+).

It localises to the microsome membrane. The protein resides in the endoplasmic reticulum membrane. The enzyme catalyses a CDP-1,2-diacyl-sn-glycerol + sn-glycerol 3-phosphate = a 1,2-diacyl-sn-glycero-3-phospho-(1'-sn-glycero-3'-phosphate) + CMP + H(+). The protein operates within phospholipid metabolism; phosphatidylglycerol biosynthesis; phosphatidylglycerol from CDP-diacylglycerol: step 1/2. Catalyzes the committed step to the synthesis of the acidic phospholipids, including phosphatidylglycerol (PG). Together with PGPS1, required for the proper embryo development by providing PG accurate levels. In Arabidopsis thaliana (Mouse-ear cress), this protein is CDP-diacylglycerol--glycerol-3-phosphate 3-phosphatidyltransferase 2.